A 292-amino-acid polypeptide reads, in one-letter code: AKT-interacting protein (292 aa).

Positions 1–64 are disordered; sequence MNPFWNMSSA…ISPSPSVQPT (64 aa). Basic and acidic residues predominate over residues 14–23; the sequence is KRSDNDEKIA. Residues 75–223 form the UBC core domain; the sequence is YLEYSLLAEF…VVDSVKLCNS (149 aa). The interval 273 to 292 is disordered; sequence SWVKPGSVLPFSKEENSLQT.

The protein belongs to the ubiquitin-conjugating enzyme family. FTS subfamily.

The protein resides in the cytoplasm. Its subcellular location is the cell membrane. In terms of biological role, may function to promote vesicle trafficking and/or fusion. May also regulate apoptosis. This is AKT-interacting protein (aktip) from Xenopus tropicalis (Western clawed frog).